The primary structure comprises 37 residues: Large ribosomal subunit protein bL36 (37 aa).

Belongs to the bacterial ribosomal protein bL36 family.

The polypeptide is Large ribosomal subunit protein bL36 (Aliarcobacter butzleri (strain RM4018) (Arcobacter butzleri)).